The following is a 141-amino-acid chain: Putative pre-16S rRNA nuclease (141 aa).

It belongs to the YqgF nuclease family.

It localises to the cytoplasm. In terms of biological role, could be a nuclease involved in processing of the 5'-end of pre-16S rRNA. This chain is Putative pre-16S rRNA nuclease, found in Cupriavidus taiwanensis (strain DSM 17343 / BCRC 17206 / CCUG 44338 / CIP 107171 / LMG 19424 / R1) (Ralstonia taiwanensis (strain LMG 19424)).